A 440-amino-acid chain; its full sequence is UDP-N-acetylmuramoylalanine--D-glutamate ligase (440 aa).

An ATP-binding site is contributed by 115–121 (GSNGKST).

Belongs to the MurCDEF family.

It is found in the cytoplasm. It catalyses the reaction UDP-N-acetyl-alpha-D-muramoyl-L-alanine + D-glutamate + ATP = UDP-N-acetyl-alpha-D-muramoyl-L-alanyl-D-glutamate + ADP + phosphate + H(+). It functions in the pathway cell wall biogenesis; peptidoglycan biosynthesis. In terms of biological role, cell wall formation. Catalyzes the addition of glutamate to the nucleotide precursor UDP-N-acetylmuramoyl-L-alanine (UMA). This is UDP-N-acetylmuramoylalanine--D-glutamate ligase from Aliivibrio fischeri (strain MJ11) (Vibrio fischeri).